The chain runs to 170 residues: Photosystem II extrinsic protein V (170 aa).

The first 33 residues, 1 to 33 (MASLFASLGRSLIKLLIVLPVIIGLSISSPAMA), serve as a signal peptide directing secretion. The heme c site is built by Cys70, Cys73, His74, and His125.

This sequence belongs to the cytochrome c family. PsbV subfamily. In terms of assembly, PSII is composed of 1 copy each of membrane proteins PsbA, PsbB, PsbC, PsbD, PsbE, PsbF, PsbH, PsbI, PsbJ, PsbK, PsbL, PsbM, PsbT, PsbX, PsbY, Psb30/Ycf12, peripheral proteins PsbO, CyanoQ (PsbQ), PsbU, PsbV and a large number of cofactors. It forms dimeric complexes. It depends on heme c as a cofactor.

It localises to the cellular thylakoid membrane. Its function is as follows. One of the extrinsic, lumenal subunits of photosystem II (PSII). PSII is a light-driven water plastoquinone oxidoreductase, using light energy to abstract electrons from H(2)O, generating a proton gradient subsequently used for ATP formation. The extrinsic proteins stabilize the structure of photosystem II oxygen-evolving complex (OEC), the ion environment of oxygen evolution and protect the OEC against heat-induced inactivation. Low-potential cytochrome c that plays a role in the OEC of PSII. This is Photosystem II extrinsic protein V from Prochlorococcus marinus (strain MIT 9313).